The primary structure comprises 111 residues: Universal stress protein B (111 aa).

A run of 2 helical transmembrane segments spans residues 1-21 and 90-110; these read MISTFALFWALCIVCIINMAR and FLLTTALCGLIVISLIAMMMW.

Belongs to the universal stress protein B family.

Its subcellular location is the cell inner membrane. This chain is Universal stress protein B, found in Pectobacterium atrosepticum (strain SCRI 1043 / ATCC BAA-672) (Erwinia carotovora subsp. atroseptica).